Reading from the N-terminus, the 2209-residue chain is Genome polyprotein (2209 aa).

Gly-2 is lipidated: N-myristoyl glycine; by host. At 2–1520 the chain is on the cytoplasmic side; it reads GAQVSSQKVG…NINRAMTILQ (1519 aa). The amphipathic alpha-helix stretch occupies residues 580–600; the sequence is GLGQMLESMIDNTVRETVGAA. Catalysis depends on for protease 2A activity residues His-901 and Asp-919. 2 residues coordinate Zn(2+): Cys-936 and Cys-938. Cys-990 serves as the catalytic For protease 2A activity. Zn(2+) is bound by residues Cys-996 and His-998. The tract at residues 1128–1200 is membrane-binding; it reads GDSWLKKFTE…HQSCPSQEHQ (73 aa). The segment at 1128-1266 is oligomerization; the sequence is GDSWLKKFTE…SPGTGKSVAT (139 aa). The RNA-binding stretch occupies residues 1149–1153; it reads SNKIS. Residues 1232–1388 form the SF3 helicase domain; that stretch reads EHTINNYIQF…NEYSRDGKLN (157 aa). 1256–1263 contacts ATP; the sequence is GSPGTGKS. Cys-1396, Cys-1399, Cys-1408, and Cys-1413 together coordinate Zn(2+). The C4-type zinc finger occupies 1396–1413; sequence CKNCHQPANFKRCCPLVC. The interval 1440–1447 is RNA-binding; the sequence is ERNRRSNI. An oligomerization region spans residues 1451–1456; it reads MEALFQ. An intramembrane segment occupies 1521–1536; that stretch reads AVTTFAAVAGVVYVMY. Topologically, residues 1537–2209 are cytoplasmic; the sequence is KLFAGHQGAY…TLYRRWLDSF (673 aa). Tyr-1546 carries the post-translational modification O-(5'-phospho-RNA)-tyrosine. One can recognise a Peptidase C3 domain in the interval 1566–1744; the sequence is GPGFDYAVAM…FAAALKRSYF (179 aa). Catalysis depends on for protease 3C activity residues His-1605, Glu-1636, and Cys-1712. The 116-residue stretch at 1975–2090 folds into the RdRp catalytic domain; it reads EKLFAFDYTG…SYPHEVDASL (116 aa). Mg(2+)-binding residues include Asp-1981 and Asp-2076.

Belongs to the picornaviruses polyprotein family. Interacts with capsid protein VP1 and capsid protein VP3 to form heterotrimeric protomers. As to quaternary structure, interacts with capsid protein VP0, and capsid protein VP3 to form heterotrimeric protomers. Interacts with human PVR. Five protomers subsequently associate to form pentamers which serve as building blocks for the capsid. Interacts with capsid protein VP2, capsid protein VP3 and capsid protein VP4 following cleavage of capsid protein VP0. In terms of assembly, interacts with capsid protein VP1 and capsid protein VP3 in the mature capsid. Interacts with capsid protein VP0 and capsid protein VP1 to form heterotrimeric protomers. Five protomers subsequently associate to form pentamers which serve as building blocks for the capsid. Interacts with capsid protein VP4 in the mature capsid. Interacts with protein 2C; this interaction may be important for virion morphogenesis. As to quaternary structure, interacts with capsid protein VP1 and capsid protein VP3. In terms of assembly, homodimer. Homohexamer; forms a hexameric ring structure with 6-fold symmetry characteristic of AAA+ ATPases. Interacts (via N-terminus) with host RTN3 (via reticulon domain); this interaction is important for viral replication. Interacts with capsid protein VP3; this interaction may be important for virion morphogenesis. As to quaternary structure, interacts with protein 3CD. In terms of assembly, homodimer. Interacts with host GBF1. Interacts (via GOLD domain) with host ACBD3 (via GOLD domain); this interaction allows the formation of a viral protein 3A/ACBD3 heterotetramer with a 2:2 stoichiometry, which will stimulate the recruitment of host PI4KB in order to synthesize PI4P at the viral RNA replication sites. Interacts with RNA-directed RNA polymerase. As to quaternary structure, interacts with protein 3AB and with RNA-directed RNA polymerase. In terms of assembly, interacts with Viral protein genome-linked and with protein 3CD. Mg(2+) serves as cofactor. Post-translationally, specific enzymatic cleavages in vivo by the viral proteases yield processing intermediates and the mature proteins. In terms of processing, myristoylation is required for the formation of pentamers during virus assembly. Further assembly of 12 pentamers and a molecule of genomic RNA generates the provirion. During virion maturation, immature virions are rendered infectious following cleavage of VP0 into VP4 and VP2. This maturation seems to be an autocatalytic event triggered by the presence of RNA in the capsid and it is followed by a conformational change infectious virion. Post-translationally, myristoylation is required during RNA encapsidation and formation of the mature virus particle. In terms of processing, VPg is uridylylated by the polymerase into VPg-pUpU. This acts as a nucleotide-peptide primer for the genomic RNA replication.

It is found in the virion. It localises to the host cytoplasm. Its subcellular location is the host cytoplasmic vesicle membrane. The protein localises to the host nucleus. The catalysed reaction is a ribonucleoside 5'-triphosphate + H2O = a ribonucleoside 5'-diphosphate + phosphate + H(+). It catalyses the reaction Selective cleavage of Tyr-|-Gly bond in the picornavirus polyprotein.. The enzyme catalyses RNA(n) + a ribonucleoside 5'-triphosphate = RNA(n+1) + diphosphate. It carries out the reaction Selective cleavage of Gln-|-Gly bond in the poliovirus polyprotein. In other picornavirus reactions Glu may be substituted for Gln, and Ser or Thr for Gly.. Replication or transcription is subject to high level of random mutations by the nucleotide analog ribavirin. In terms of biological role, forms an icosahedral capsid of pseudo T=3 symmetry with capsid proteins VP2 and VP3. The capsid is 300 Angstroms in diameter, composed of 60 copies of each capsid protein and enclosing the viral positive strand RNA genome. Capsid protein VP1 mainly forms the vertices of the capsid. Capsid protein VP1 interacts with host cell receptor PVR to provide virion attachment to target host cells. This attachment induces virion internalization predominantly through clathrin- and caveolin-independent endocytosis in Hela cells and through caveolin-mediated endocytosis in brain microvascular endothelial cells. Tyrosine kinases are probably involved in the entry process. Virus binding to PVR induces increased junctional permeability and rearrangement of junctional proteins. Modulation of endothelial tight junctions, as well as cytolytic infection of endothelial cells themselves, may result in loss of endothelial integrity which may help the virus to reach the CNS. After binding to its receptor, the capsid undergoes conformational changes. Capsid protein VP1 N-terminus (that contains an amphipathic alpha-helix) and capsid protein VP4 are externalized. Together, they shape a pore in the host membrane through which viral genome is translocated to host cell cytoplasm. Its function is as follows. Forms an icosahedral capsid of pseudo T=3 symmetry with capsid proteins VP2 and VP3. The capsid is 300 Angstroms in diameter, composed of 60 copies of each capsid protein and enclosing the viral positive strand RNA genome. Functionally, lies on the inner surface of the capsid shell. After binding to the host receptor, the capsid undergoes conformational changes. Capsid protein VP4 is released, Capsid protein VP1 N-terminus is externalized, and together, they shape a pore in the host membrane through which the viral genome is translocated into the host cell cytoplasm. Component of immature procapsids, which is cleaved into capsid proteins VP4 and VP2 after maturation. Allows the capsid to remain inactive before the maturation step. In terms of biological role, cysteine protease that cleaves viral polyprotein and specific host proteins. It is responsible for the autocatalytic cleavage between the P1 and P2 regions, which is the first cleavage occurring in the polyprotein. Also cleaves the host translation initiation factor EIF4G1, in order to shut down the capped cellular mRNA translation. Inhibits the host nucleus-cytoplasm protein and RNA trafficking by cleaving host members of the nuclear pores including NUP98, NUP62 and NUP153. Counteracts stress granule formation probably by antagonizing its assembly or promoting its dissassembly. Cleaves and inhibits host IFIH1/MDA5, thereby inhibiting the type-I IFN production and the establishment of the antiviral state. Cleaves and inhibits host MAVS, thereby inhibiting the type-I IFN production and the establishment of the antiviral state. Its function is as follows. Plays an essential role in the virus replication cycle by acting as a viroporin. Creates a pore in the host endoplasmic reticulum and as a consequence releases Ca2+ in the cytoplasm of infected cell. In turn, high levels of cytoplasmic calcium may trigger membrane trafficking and transport of viral ER-associated proteins to viroplasms, sites of viral genome replication. Functionally, induces and associates with structural rearrangements of intracellular membranes. Displays RNA-binding, nucleotide binding and NTPase activities. May play a role in virion morphogenesis and viral RNA encapsidation by interacting with the capsid protein VP3. Localizes the viral replication complex to the surface of membranous vesicles. Together with protein 3CD binds the Cis-Active RNA Element (CRE) which is involved in RNA synthesis initiation. Acts as a cofactor to stimulate the activity of 3D polymerase, maybe through a nucleid acid chaperone activity. In terms of biological role, localizes the viral replication complex to the surface of membranous vesicles. It inhibits host cell endoplasmic reticulum-to-Golgi apparatus transport and causes the disassembly of the Golgi complex, possibly through GBF1 interaction. This would result in depletion of MHC, trail receptors and IFN receptors at the host cell surface. Plays an essential role in viral RNA replication by recruiting ACBD3 and PI4KB at the viral replication sites, thereby allowing the formation of the rearranged membranous structures where viral replication takes place. Its function is as follows. Acts as a primer for viral RNA replication and remains covalently bound to viral genomic RNA. VPg is uridylylated prior to priming replication into VPg-pUpU. The oriI viral genomic sequence may act as a template for this. The VPg-pUpU is then used as primer on the genomic RNA poly(A) by the RNA-dependent RNA polymerase to replicate the viral genome. During genome replication, the VPg-RNA linkage is removed by the host TDP2, thereby accelerating replication. During the late stage of the replication cycle, host TDP2 is excluded from sites of viral RNA synthesis and encapsidation, allowing for the generation of progeny virions. Functionally, involved in the viral replication complex and viral polypeptide maturation. It exhibits protease activity with a specificity and catalytic efficiency that is different from protease 3C. Protein 3CD lacks polymerase activity. Protein 3CD binds to the 5'UTR of the viral genome. Major viral protease that mediates proteolytic processing of the polyprotein. Cleaves host EIF5B, contributing to host translation shutoff. Also cleaves host PABPC1, contributing to host translation shutoff. Cleaves host RIGI and thus contributes to the inhibition of type I interferon production. Cleaves host NLRP1, triggers host N-glycine-mediated degradation of the autoinhibitory NLRP1 N-terminal fragment. Inhibits the integrated stress response (ISR) in the infected cell by cleaving host G3BP1. Stress granule formation is thus inhibited, which allows protein synthesis and viral replication. In terms of biological role, replicates the viral genomic RNA on the surface of intracellular membranes. May form linear arrays of subunits that propagate along a strong head-to-tail interaction called interface-I. Covalently attaches UMP to a tyrosine of VPg, which is used to prime RNA synthesis. The positive stranded RNA genome is first replicated at virus induced membranous vesicles, creating a dsRNA genomic replication form. This dsRNA is then used as template to synthesize positive stranded RNA genomes. ss(+)RNA genomes are either translated, replicated or encapsidated. The chain is Genome polyprotein from Homo sapiens (Human).